The primary structure comprises 709 residues: MDQKLSKLVEELTTSGEPRLNPEKMKELKKICKSSEEQLSRAYRLLIAQLTQEHAEIRLSAFQIVEELFVRSHQFRMLVVSNFQEFLELTLGTDPAQPLPPPREAAQRLRQATTRAVEGWNEKFGEAYKKLALGYHFLRHNKKVDFQDTNARSLAERKREEEKQKHLDKIYQERASQAEREMQEMSGEIESCLTEVESCFRLLVPFDFDPNPETESLGMASGMSDALRSSCAGQVGPCRSGTPDPRDGEQPCCSRDLPASAGHPRAGGGAQPSQTATGDPSDEDEDSDLEEFVRSHGLGSHKYTLDVELCSEGLKVQENEDNLALIHAARDTLKLIRNKFLPAVCSWIQRFTRVGTHGGCLKRAIDLKAELELVLRKYKELDIEPEGGERRRTEALGDAEEDEDDEDFVEVPEKEGYEPHIPDHLRPEYGLEAAPEKDTVVRCLRTRTRMDEEVSDPTSAAAQLRQLRDHLPPPSSASPSRALPEPQEAQKLAAERARAPVVPYGVDLHYWGQELPTAGKIVKSDSQHRFWKPSEVEEEVVNADISEMLRSRHITFAGKFEPVQHWCRAPRPDGRLCERQDRLKCPFHGKIVPRDDEGRPLDPEDRAREQRRQLQKQERPEWQDPELMRDVEAATGQDLGSSRYSGKGRGKKRRYPSLTNLKAQADTARARIGRKVFAKAAVRRVVAAMNRMDQKKHEKFSNQFNYALN.

Residues Met1–Glu10 show a composition bias toward basic and acidic residues. The disordered stretch occupies residues Met1–Leu20. The VHS-like stretch occupies residues Asp2–Asp145. Residues Lys165 to Cys199 adopt a coiled-coil conformation. 2 disordered regions span residues Ser230–Leu289 and Glu386–Glu406. Acidic residues predominate over residues Pro280–Leu289. Ser281 and Ser287 each carry phosphoserine. Residues Glu386–Ala395 show a composition bias toward basic and acidic residues. A compositionally biased stretch (acidic residues) spans Gly397 to Glu406. Residue Lys414 forms a Glycyl lysine isopeptide (Lys-Gly) (interchain with G-Cter in ubiquitin) linkage. The segment at Asp469 to Glu495 is disordered. Low complexity predominate over residues Ala477–Pro486. A UVSSA-type zinc finger spans residues Gln564 to Ile591. Cys567, Cys577, Cys585, and His588 together coordinate Zn(2+). Positions His588–Tyr655 are disordered. Residues Val592–Glu632 are compositionally biased toward basic and acidic residues. A compositionally biased stretch (basic residues) spans Gly646 to Tyr655.

This sequence belongs to the UVSSA family. In terms of assembly, interacts with the elongating form of RNA polymerase II (RNA pol IIo) during transcription stress. Interacts with the TFIIH complex during transcription stress. Interacts with ERCC6. Interacts with ERCC8. Interacts with USP7. In terms of processing, monoubiquitinated at Lys-414 in response to transcription stress; this promotes efficient transfer of TFIIH to stalled RNA polymerase II.

It is found in the chromosome. Its function is as follows. Factor involved in transcription-coupled nucleotide excision repair (TC-NER), a mechanism that rapidly removes RNA polymerase II-blocking lesions from the transcribed strand of active genes. Acts as a key adapter that promotes recruitment of factors involved in TC-NER. Facilitates the ubiquitination of the elongating form of RNA polymerase II (RNA pol IIo) at DNA damage sites, thereby promoting RNA pol IIo backtracking and access by the TC-NER machinery to lesion sites. Also promotes stabilization of ERCC6/CSB by recruiting deubiquitinating enzyme USP7 to TC-NER complexes, preventing UV-induced degradation of ERCC6 by the proteasome. Mediates the recruitment of the TFIIH complex and other factors that are required for nucleotide excision repair to RNA polymerase II. Also required to inactivate stalled RNA polymerase II by blocking the access of TCEA1/TFIIS, thereby preventing reactivation of RNA polymerase II. Not involved in processing oxidative damage. The sequence is that of UV-stimulated scaffold protein A from Homo sapiens (Human).